The chain runs to 1479 residues: Putative receptor-type tyrosine-protein phosphatase mosPTP-1 (1479 aa).

Positions 1 to 28 (MKPRLLTTVTTWLALVLPVVYLSRPCQA) are cleaved as a signal peptide. The Extracellular portion of the chain corresponds to 29–365 (LPTVNFTANY…RQSYNDYNLA (337 aa)). 7 N-linked (GlcNAc...) asparagine glycosylation sites follow: Asn-33, Asn-40, Asn-146, Asn-182, Asn-248, Asn-294, and Asn-306. 2 consecutive Fibronectin type-III domains span residues 143-242 (KPLN…AGPS) and 243-346 (APKV…VQLN). Residues 366–386 (VMIGILICCFGLLFIVLTILL) traverse the membrane as a helical segment. At 387-1479 (WKKCFHAAYY…AKLRAVVRVE (1093 aa)) the chain is on the cytoplasmic side. Tyrosine-protein phosphatase domains are found at residues 452-717 (FSKE…LVEA) and 740-992 (IDSQ…LSYM). Cys-658 (phosphocysteine intermediate) is an active-site residue.

Belongs to the protein-tyrosine phosphatase family. Receptor class subfamily. As to quaternary structure, interacts with C-type lectin mosGCTL-1. Interacts with C-type lectin mosGCTL-7.

Its subcellular location is the cell membrane. The enzyme catalyses O-phospho-L-tyrosyl-[protein] + H2O = L-tyrosyl-[protein] + phosphate. Functionally, putative protein tyrosine-protein phosphatase. (Microbial infection) Facilitates West Nile virus infection in mosquitoes. This Culex quinquefasciatus (Southern house mosquito) protein is Putative receptor-type tyrosine-protein phosphatase mosPTP-1.